The primary structure comprises 623 residues: Protein EDS1L (623 aa).

A2 is modified (N-acetylalanine). The Nucleophile role is filled by S123. Catalysis depends on charge relay system residues D187 and H317.

In terms of assembly, homodimer. Interacts with RPS4, RPS6, SNC1, SRFR1, AvrRps4 and HopA1. Interacts with PAD4 (via N-terminus). Interacts with SAG101. EDS1-SAG101 and EDS1-PAD4 form separate complexes in pathogen-unchallenged cells.

The protein localises to the nucleus. It is found in the cytoplasm. The protein resides in the microsome. Its function is as follows. Positive regulator of basal resistance and of effector-triggered immunity specifically mediated by TIR-NB-LRR resistance proteins. Disruption by bacterial effector of EDS1-TIR-NB-LRR resistance protein interactions constitutes the first step in resistance activation. Triggers early plant defenses and hypersensitive response independently of PAD4, and then recruits PAD4 to potentiate plant defenses through the accumulation of salicylic acid. Nuclear localization is essential for basal and TIR-NB-LRR-conditioned immunity and for reprogramming defense gene expression, while cytoplasmic EDS1 is required to induce a complete immune response. Heterodimerization with PAD4 or SGA101 is necessary for TNL-mediated effector-triggered immunity. Contributes to nonhost resistance against E.amylovora. Has no direct lipase activity. In Arabidopsis thaliana (Mouse-ear cress), this protein is Protein EDS1L.